We begin with the raw amino-acid sequence, 363 residues long: Flagellar P-ring protein 2 (363 aa).

The first 20 residues, 1–20 (MKRIVLLLMSVALFSTAAQA), serve as a signal peptide directing secretion.

Belongs to the FlgI family. In terms of assembly, the basal body constitutes a major portion of the flagellar organelle and consists of four rings (L,P,S, and M) mounted on a central rod.

The protein localises to the periplasm. Its subcellular location is the bacterial flagellum basal body. Functionally, assembles around the rod to form the L-ring and probably protects the motor/basal body from shearing forces during rotation. The chain is Flagellar P-ring protein 2 (flgI2) from Vibrio parahaemolyticus serotype O3:K6 (strain RIMD 2210633).